The sequence spans 273 residues: DnaJ homolog subfamily C member 27 (273 aa).

Residues 1-18 (MEANMPKRKEPGRSLRIK) form a required for interaction with MAPK1 region. GTP contacts are provided by residues 23 to 30 (GNAEVGKS), 71 to 75 (DMAGH), and 134 to 137 (NKID). The J domain occupies 217–273 (GSWDMLGVKPGASRDEVNKACRKLAVLLHPDKCVAPGSEDAFKAVVNARTALLKNIK).

This sequence belongs to the small GTPase superfamily. Rab family. In terms of assembly, interacts directly with MAPK1 (wild-type and kinase-deficient forms). Interacts directly (in GTP-bound form) with MAP2K1 (wild-type and kinase-deficient forms).

The protein localises to the nucleus. Its function is as follows. GTPase which can activate the MEK/ERK pathway and induce cell transformation when overexpressed. May act as a nuclear scaffold for MAPK1, probably by association with MAPK1 nuclear export signal leading to enhanced ERK1/ERK2 signaling. This is DnaJ homolog subfamily C member 27 (DNAJC27) from Pongo abelii (Sumatran orangutan).